The primary structure comprises 249 residues: Exosome complex component Rrp41 (249 aa).

Belongs to the RNase PH family. Rrp41 subfamily. As to quaternary structure, component of the archaeal exosome complex. Forms a hexameric ring-like arrangement composed of 3 Rrp41-Rrp42 heterodimers. The hexameric ring associates with a trimer of Rrp4 and/or Csl4 subunits.

The protein resides in the cytoplasm. Functionally, catalytic component of the exosome, which is a complex involved in RNA degradation. Has 3'-&gt;5' exoribonuclease activity. Can also synthesize heteromeric RNA-tails. The polypeptide is Exosome complex component Rrp41 (Thermococcus kodakarensis (strain ATCC BAA-918 / JCM 12380 / KOD1) (Pyrococcus kodakaraensis (strain KOD1))).